The chain runs to 202 residues: ATP-dependent Clp protease proteolytic subunit 2 (202 aa).

Serine 99 serves as the catalytic Nucleophile. Residue histidine 124 is part of the active site.

The protein belongs to the peptidase S14 family. Fourteen ClpP subunits assemble into 2 heptameric rings which stack back to back to give a disk-like structure with a central cavity, resembling the structure of eukaryotic proteasomes.

The protein localises to the cytoplasm. It catalyses the reaction Hydrolysis of proteins to small peptides in the presence of ATP and magnesium. alpha-casein is the usual test substrate. In the absence of ATP, only oligopeptides shorter than five residues are hydrolyzed (such as succinyl-Leu-Tyr-|-NHMec, and Leu-Tyr-Leu-|-Tyr-Trp, in which cleavage of the -Tyr-|-Leu- and -Tyr-|-Trp bonds also occurs).. Its function is as follows. Cleaves peptides in various proteins in a process that requires ATP hydrolysis. Has a chymotrypsin-like activity. Plays a major role in the degradation of misfolded proteins. The chain is ATP-dependent Clp protease proteolytic subunit 2 from Desulfitobacterium hafniense (strain Y51).